A 497-amino-acid chain; its full sequence is Virion host shutoff protein (497 aa).

2 disordered regions span residues Glu122–Asp142 and Ser280–Ala373. Residues Pro309–Asp326 show a composition bias toward basic and acidic residues. The segment covering Ser327–Cys344 has biased composition (acidic residues).

Belongs to the herpesviridae VHS protein family.

Its subcellular location is the virion. Its function is as follows. Minor structural protein that acts as an endoribonuclease during lytic infection. Degrades host mRNAs in the cytoplasm by cutting them at preferred sites, including some in regions of translation initiation. In Equine herpesvirus 1 (strain Ab4p) (EHV-1), this protein is Virion host shutoff protein.